Here is a 217-residue protein sequence, read N- to C-terminus: Deoxyribose-phosphate aldolase (217 aa).

Aspartate 89 serves as the catalytic Proton donor/acceptor. Lysine 151 (schiff-base intermediate with acetaldehyde) is an active-site residue. Lysine 180 serves as the catalytic Proton donor/acceptor.

It belongs to the DeoC/FbaB aldolase family. DeoC type 1 subfamily.

Its subcellular location is the cytoplasm. The enzyme catalyses 2-deoxy-D-ribose 5-phosphate = D-glyceraldehyde 3-phosphate + acetaldehyde. It participates in carbohydrate degradation; 2-deoxy-D-ribose 1-phosphate degradation; D-glyceraldehyde 3-phosphate and acetaldehyde from 2-deoxy-alpha-D-ribose 1-phosphate: step 2/2. Functionally, catalyzes a reversible aldol reaction between acetaldehyde and D-glyceraldehyde 3-phosphate to generate 2-deoxy-D-ribose 5-phosphate. This Metamycoplasma arthritidis (strain 158L3-1) (Mycoplasma arthritidis) protein is Deoxyribose-phosphate aldolase.